The sequence spans 95 residues: ESAT-6-like protein EsxC (95 aa).

Belongs to the WXG100 family. ESAT-6 subfamily.

Its subcellular location is the secreted. The chain is ESAT-6-like protein EsxC from Mycobacterium tuberculosis (strain CDC 1551 / Oshkosh).